We begin with the raw amino-acid sequence, 365 residues long: Flagellar P-ring protein (365 aa).

The N-terminal stretch at methionine 1–alanine 19 is a signal peptide.

It belongs to the FlgI family. The basal body constitutes a major portion of the flagellar organelle and consists of four rings (L,P,S, and M) mounted on a central rod.

It localises to the periplasm. The protein resides in the bacterial flagellum basal body. Its function is as follows. Assembles around the rod to form the L-ring and probably protects the motor/basal body from shearing forces during rotation. This chain is Flagellar P-ring protein, found in Escherichia fergusonii (strain ATCC 35469 / DSM 13698 / CCUG 18766 / IAM 14443 / JCM 21226 / LMG 7866 / NBRC 102419 / NCTC 12128 / CDC 0568-73).